Here is a 248-residue protein sequence, read N- to C-terminus: 2,3-bisphosphoglycerate-dependent phosphoglycerate mutase (248 aa).

Substrate contacts are provided by residues 9–16 (RHGHSEWN), 22–23 (TG), Arg61, 88–91 (ERHY), Lys99, 115–116 (RR), and 183–184 (GN). His10 (tele-phosphohistidine intermediate) is an active-site residue. The Proton donor/acceptor role is filled by Glu88.

It belongs to the phosphoglycerate mutase family. BPG-dependent PGAM subfamily.

It catalyses the reaction (2R)-2-phosphoglycerate = (2R)-3-phosphoglycerate. It functions in the pathway carbohydrate degradation; glycolysis; pyruvate from D-glyceraldehyde 3-phosphate: step 3/5. Its function is as follows. Catalyzes the interconversion of 2-phosphoglycerate and 3-phosphoglycerate. This chain is 2,3-bisphosphoglycerate-dependent phosphoglycerate mutase, found in Arthrobacter sp. (strain FB24).